We begin with the raw amino-acid sequence, 210 residues long: MRLIVGLGNPGARYARNRHNIGFMAVDEIARVHRAAPFRRRFQGEAAEVMLGSERAILLKPQTFMNESGRSVGEAQRFFKIPLADVIVLHDELDLAPAKLRVKLGGGNAGHNGLRSITALCGNEYRRVRLGIGHPGDKALVHAYVLNDFAKSEEPWVEDLCRATADHAPLLAAGEDASFQNKVHLAMAGRGWETVKTPAEAGKAKARDAN.

Y14 is a tRNA binding site. Catalysis depends on H19, which acts as the Proton acceptor. The tRNA site is built by F64, N66, and N112.

Belongs to the PTH family. In terms of assembly, monomer.

It localises to the cytoplasm. The catalysed reaction is an N-acyl-L-alpha-aminoacyl-tRNA + H2O = an N-acyl-L-amino acid + a tRNA + H(+). Hydrolyzes ribosome-free peptidyl-tRNAs (with 1 or more amino acids incorporated), which drop off the ribosome during protein synthesis, or as a result of ribosome stalling. Its function is as follows. Catalyzes the release of premature peptidyl moieties from peptidyl-tRNA molecules trapped in stalled 50S ribosomal subunits, and thus maintains levels of free tRNAs and 50S ribosomes. This chain is Peptidyl-tRNA hydrolase, found in Methylorubrum extorquens (strain CM4 / NCIMB 13688) (Methylobacterium extorquens).